Here is a 396-residue protein sequence, read N- to C-terminus: 1-deoxy-D-xylulose 5-phosphate reductoisomerase (396 aa).

Residues T17, G18, S19, I20, N47, and N130 each contribute to the NADPH site. 1-deoxy-D-xylulose 5-phosphate is bound at residue K131. NADPH is bound at residue E132. D156 is a binding site for Mn(2+). 1-deoxy-D-xylulose 5-phosphate is bound by residues S157, E158, S182, and H205. E158 is a binding site for Mn(2+). G211 serves as a coordination point for NADPH. S218, N223, K224, and E227 together coordinate 1-deoxy-D-xylulose 5-phosphate. E227 provides a ligand contact to Mn(2+).

Belongs to the DXR family. Mg(2+) serves as cofactor. It depends on Mn(2+) as a cofactor.

It catalyses the reaction 2-C-methyl-D-erythritol 4-phosphate + NADP(+) = 1-deoxy-D-xylulose 5-phosphate + NADPH + H(+). The protein operates within isoprenoid biosynthesis; isopentenyl diphosphate biosynthesis via DXP pathway; isopentenyl diphosphate from 1-deoxy-D-xylulose 5-phosphate: step 1/6. Functionally, catalyzes the NADPH-dependent rearrangement and reduction of 1-deoxy-D-xylulose-5-phosphate (DXP) to 2-C-methyl-D-erythritol 4-phosphate (MEP). The sequence is that of 1-deoxy-D-xylulose 5-phosphate reductoisomerase from Rhizobium johnstonii (strain DSM 114642 / LMG 32736 / 3841) (Rhizobium leguminosarum bv. viciae).